A 378-amino-acid chain; its full sequence is Odorant receptor Or2 (378 aa).

A topological domain (cytoplasmic) is located at residue M1. The chain crosses the membrane as a helical span at residues 2-22; that stretch reads LIEECPIIGVNVRVWLFWSYL. At 23–29 the chain is on the extracellular side; that stretch reads RRPRLSR. A helical transmembrane segment spans residues 30-50; sequence FLVGCIPVAVLNVFQFLKLYS. Residues 51 to 59 are Cytoplasmic-facing; the sequence is SWGDMSELI. A helical transmembrane segment spans residues 60-80; that stretch reads INGYFTVLYFNLVLRTSFLVI. Residues 81 to 120 lie on the Extracellular side of the membrane; that stretch reads NRRKFETFFEGVAAEYALLEKNDDIRPVLERYTRRGRMLS. Residues 121 to 141 traverse the membrane as a helical segment; that stretch reads ISNLWLGAFISACFVTYPLFV. Residues 142–164 lie on the Cytoplasmic side of the membrane; that stretch reads PGRGLPYGVTIPGVDVLATPTYQ. The chain crosses the membrane as a helical span at residues 165 to 185; sequence VVFVLQVYLTFPACCMYIPFT. Over 186–254 the chain is Extracellular; that stretch reads SFYATCTLFA…HDLNSLVTHL (69 aa). Residues 255–275 form a helical membrane-spanning segment; it reads CLLEFLSFGMMLCALLFLLSI. Over 276–278 the chain is Cytoplasmic; that stretch reads SNQ. Residues 279–299 form a helical membrane-spanning segment; the sequence is LAQMIMIGSYIFMILSQMFAF. Residues 300–378 are Extracellular-facing; it reads YWHANEVLEQ…YFTLLRRVYN (79 aa). N-linked (GlcNAc...) asparagine glycosylation is present at N364.

The protein belongs to the insect chemoreceptor superfamily. Heteromeric odorant receptor channel (TC 1.A.69) family. Or30a subfamily. Expressed in male and female antennae and maxillary palps.

It is found in the cell membrane. Its function is as follows. Odorant receptor which plays a critical role in the anthropophilic host-seeking behavior; establishes the host preference to transmit malaria. In Anopheles gambiae (African malaria mosquito), this protein is Odorant receptor Or2 (OR2).